Here is a 105-residue protein sequence, read N- to C-terminus: Guanidinium exporter (105 aa).

Residues 1–21 (MSWIILLIAGLLEVVWAVGLK) form a helical membrane-spanning segment. The Cytoplasmic segment spans residues 22–28 (YTHGFSR). Residues 29 to 49 (LTPSIITITAMVISMALLSWA) form a helical membrane-spanning segment. Topologically, residues 50–57 (MKTLPVGT) are periplasmic. A helical transmembrane segment spans residues 58–78 (AYAIWTGIGAVGAAITGILLL). Residues 79–81 (GES) lie on the Cytoplasmic side of the membrane. A helical membrane pass occupies residues 82-102 (ASPARLLSLGLIVAGIIGLKL). At 103 to 105 (SAH) the chain is on the periplasmic side.

Belongs to the drug/metabolite transporter (DMT) superfamily. Small multidrug resistance (SMR) (TC 2.A.7.1) family. Gdx/SugE subfamily.

It is found in the cell inner membrane. Functionally, guanidinium ion exporter. Couples guanidinium export to the proton motive force, exchanging one guanidinium ion for two protons. This chain is Guanidinium exporter, found in Salmonella typhi.